We begin with the raw amino-acid sequence, 205 residues long: Endoribonuclease YbeY (205 aa).

Residues histidine 124, histidine 128, and histidine 134 each coordinate Zn(2+). The interval 162 to 205 is disordered; sequence GTAPVAPGGEAQVPNEALETSGKRQDHSLGEILPGGMSRRLAGS.

It belongs to the endoribonuclease YbeY family. Requires Zn(2+) as cofactor.

It is found in the cytoplasm. In terms of biological role, single strand-specific metallo-endoribonuclease involved in late-stage 70S ribosome quality control and in maturation of the 3' terminus of the 16S rRNA. In Beijerinckia indica subsp. indica (strain ATCC 9039 / DSM 1715 / NCIMB 8712), this protein is Endoribonuclease YbeY.